A 602-amino-acid polypeptide reads, in one-letter code: Spermidine-citrate ligase (602 aa).

Residues 286 to 288 (SLR), lysine 300, and arginine 312 contribute to the ATP site.

The protein belongs to the IucA/IucC family.

It catalyses the reaction spermidine + citrate + ATP = N(8)-citryl-spermidine + AMP + diphosphate + H(+). It participates in siderophore biosynthesis; petrobactin biosynthesis. Involved in the biosynthesis of petrobactin, a catecholate siderophore that functions in both iron acquisition and virulence. Catalyzes the ATP-dependent condensation of citric acid and spermidine to form N(8)-citryl-spermidine. It can also catalyze the condensation of several di- and triamine analogs of spermidine with citric acid and the condensation of the citric acid analog tricarballylic acid with spermidine. Required for growth in iron-depleted medium and for full virulence in a mouse model of infection. This chain is Spermidine-citrate ligase, found in Bacillus anthracis.